A 273-amino-acid chain; its full sequence is Putative peptidyl-prolyl cis-trans isomerase Cbf2 (273 aa).

The N-terminal stretch at 1–21 (MKKFSLVAATLIAGVVLNVNA) is a signal peptide. Residues 131-228 (PARVQAKHIL…FGYHVILKEN (98 aa)) form the PpiC domain.

The catalysed reaction is [protein]-peptidylproline (omega=180) = [protein]-peptidylproline (omega=0). The sequence is that of Putative peptidyl-prolyl cis-trans isomerase Cbf2 (cbf2) from Campylobacter jejuni subsp. jejuni serotype O:2 (strain ATCC 700819 / NCTC 11168).